The sequence spans 520 residues: Protein nucleotidyltransferase YdiU (520 aa).

8 residues coordinate ATP: Gly108, Gly110, Arg111, Lys130, Asp142, Gly143, Arg193, and Arg200. Catalysis depends on Asp269, which acts as the Proton acceptor. 2 residues coordinate Mg(2+): Asn270 and Asp279. Asp279 serves as a coordination point for ATP.

The protein belongs to the SELO family. It depends on Mg(2+) as a cofactor. Requires Mn(2+) as cofactor.

The enzyme catalyses L-seryl-[protein] + ATP = 3-O-(5'-adenylyl)-L-seryl-[protein] + diphosphate. It carries out the reaction L-threonyl-[protein] + ATP = 3-O-(5'-adenylyl)-L-threonyl-[protein] + diphosphate. It catalyses the reaction L-tyrosyl-[protein] + ATP = O-(5'-adenylyl)-L-tyrosyl-[protein] + diphosphate. The catalysed reaction is L-histidyl-[protein] + UTP = N(tele)-(5'-uridylyl)-L-histidyl-[protein] + diphosphate. The enzyme catalyses L-seryl-[protein] + UTP = O-(5'-uridylyl)-L-seryl-[protein] + diphosphate. It carries out the reaction L-tyrosyl-[protein] + UTP = O-(5'-uridylyl)-L-tyrosyl-[protein] + diphosphate. Functionally, nucleotidyltransferase involved in the post-translational modification of proteins. It can catalyze the addition of adenosine monophosphate (AMP) or uridine monophosphate (UMP) to a protein, resulting in modifications known as AMPylation and UMPylation. This Cupriavidus pinatubonensis (strain JMP 134 / LMG 1197) (Cupriavidus necator (strain JMP 134)) protein is Protein nucleotidyltransferase YdiU.